We begin with the raw amino-acid sequence, 481 residues long: Polygalacturonase QRT3 (481 aa).

The N-terminal stretch at methionine 1–alanine 27 is a signal peptide. PbH1 repeat units follow at residues serine 203–serine 226, glycine 261–glycine 282, and isoleucine 356–glutamine 377. N-linked (GlcNAc...) asparagine glycans are attached at residues asparagine 415 and asparagine 455.

The protein belongs to the glycosyl hydrolase 28 family. As to expression, expressed in the tapetum cells in the anthers and in the ovules of open flowers.

It is found in the secreted. The protein resides in the cell wall. The catalysed reaction is (1,4-alpha-D-galacturonosyl)n+m + H2O = (1,4-alpha-D-galacturonosyl)n + (1,4-alpha-D-galacturonosyl)m.. Functionally, polygalacturonase required for degrading the pollen mother cell wall during microspore development. In Arabidopsis thaliana (Mouse-ear cress), this protein is Polygalacturonase QRT3 (QRT3).